A 653-amino-acid polypeptide reads, in one-letter code: Epithelial sodium channel subunit gamma (653 aa).

The Cytoplasmic portion of the chain corresponds to Met1–Trp54. Residues Ile55–Leu75 form a helical membrane-spanning segment. The Extracellular portion of the chain corresponds to Met76 to Cys546. 8 disulfide bridges follow: Cys100-Cys290, Cys214-Cys221, Cys267-Cys274, Cys379-Cys464, Cys401-Cys460, Cys405-Cys456, Cys414-Cys441, and Cys416-Cys430. A helical transmembrane segment spans residues Ser547–Ala567. At Arg568–Asn653 the chain is on the cytoplasmic side. The tract at residues Lys582 to Asp608 is disordered.

Belongs to the amiloride-sensitive sodium channel (TC 1.A.6) family. SCNN1G subfamily. In terms of assembly, component of the heterotrimeric epithelial sodium channel (ENaC) composed of an alpha/SCNN1A, a beta/SCNN1B and a gamma/SCNN1G subunit. As to expression, strongly expressed in gill, liver, kidney and rectum and more weakly in heart, muscle and intestine.

The protein resides in the apical cell membrane. It catalyses the reaction Na(+)(in) = Na(+)(out). Originally identified and characterized by its inhibition by the diuretic drug amiloride. This is one of the three pore-forming subunits of the heterotrimeric epithelial sodium channel (ENaC), a critical regulator of sodium balance and fluid homeostasis. ENaC operates in epithelial tissues, where it mediates the electrodiffusion of sodium ions from extracellular fluid through the apical membrane of cells, with water following osmotically. The protein is Epithelial sodium channel subunit gamma of Neoceratodus forsteri (Australian lungfish).